The chain runs to 203 residues: Pyridoxine/pyridoxamine 5'-phosphate oxidase (203 aa).

FMN-binding positions include 50–55 (RMVLLK), 65–66 (YT), K72, and Q94. K55 contacts substrate. Substrate-binding residues include Y112, R116, and S120. FMN is bound by residues 129–130 (QS) and W174. 180–182 (RLH) lines the substrate pocket. R184 serves as a coordination point for FMN.

It belongs to the pyridoxamine 5'-phosphate oxidase family. As to quaternary structure, homodimer. Requires FMN as cofactor.

It catalyses the reaction pyridoxamine 5'-phosphate + O2 + H2O = pyridoxal 5'-phosphate + H2O2 + NH4(+). It carries out the reaction pyridoxine 5'-phosphate + O2 = pyridoxal 5'-phosphate + H2O2. The protein operates within cofactor metabolism; pyridoxal 5'-phosphate salvage; pyridoxal 5'-phosphate from pyridoxamine 5'-phosphate: step 1/1. It functions in the pathway cofactor metabolism; pyridoxal 5'-phosphate salvage; pyridoxal 5'-phosphate from pyridoxine 5'-phosphate: step 1/1. In terms of biological role, catalyzes the oxidation of either pyridoxine 5'-phosphate (PNP) or pyridoxamine 5'-phosphate (PMP) into pyridoxal 5'-phosphate (PLP). This Brucella anthropi (strain ATCC 49188 / DSM 6882 / CCUG 24695 / JCM 21032 / LMG 3331 / NBRC 15819 / NCTC 12168 / Alc 37) (Ochrobactrum anthropi) protein is Pyridoxine/pyridoxamine 5'-phosphate oxidase.